We begin with the raw amino-acid sequence, 213 residues long: Ras-related protein Rab-4B (213 aa).

The residue at position 2 (A2) is an N-acetylalanine. G18, T19, G20, K21, S22, and C23 together coordinate GDP. GTP is bound by residues G18, T19, G20, K21, S22, C23, S37, H39, and T40. Residue S22 participates in Mg(2+) binding. The Switch 1 signature appears at 39–44 (HTIGVE). Positions 40 and 63 each coordinate Mg(2+). Positions 65-74 (AGQERFRSVT) match the Switch 2 motif. GTP is bound at residue G66. The residue at position 67 (Q67) is a 5-glutamyl serotonin. Positions 121, 122, 124, 152, and 153 each coordinate GDP. Residues N121, K122, D124, A152, and L153 each coordinate GTP. Residues S185 and S193 each carry the phosphoserine modification. Residues C211 and C213 are each lipidated (S-geranylgeranyl cysteine). Position 213 is a cysteine methyl ester (C213).

Belongs to the small GTPase superfamily. Rab family. In terms of assembly, interacts (GTP-bound form) with RUFY1; the interaction allows endosomal tethering and fusion. Requires Mg(2+) as cofactor. In terms of processing, serotonylation of Gln-67 by TGM2 during activation and aggregation of platelets leads to constitutive activation of GTPase activity.

The protein localises to the cell membrane. The protein resides in the early endosome membrane. It carries out the reaction GTP + H2O = GDP + phosphate + H(+). With respect to regulation, regulated by guanine nucleotide exchange factors (GEFs) which promote the exchange of bound GDP for free GTP. Regulated by GTPase activating proteins (GAPs) which increase the GTP hydrolysis activity. Inhibited by GDP dissociation inhibitors (GDIs). In terms of biological role, the small GTPases Rab are key regulators of intracellular membrane trafficking, from the formation of transport vesicles to their fusion with membranes. Rabs cycle between an inactive GDP-bound form and an active GTP-bound form that is able to recruit to membranes different set of downstream effectors directly responsible for vesicle formation, movement, tethering and fusion. RAB4B mediates endosomal tethering and fusion through the interaction with RUFY1 and RAB14. Acts as a regulator of platelet alpha-granule release during activation and aggregation of platelets. The protein is Ras-related protein Rab-4B of Homo sapiens (Human).